Here is a 339-residue protein sequence, read N- to C-terminus: Phenylalanine--tRNA ligase alpha subunit (339 aa).

Glu-250 is a binding site for Mg(2+).

This sequence belongs to the class-II aminoacyl-tRNA synthetase family. Phe-tRNA synthetase alpha subunit type 1 subfamily. Tetramer of two alpha and two beta subunits. Requires Mg(2+) as cofactor.

It localises to the cytoplasm. The catalysed reaction is tRNA(Phe) + L-phenylalanine + ATP = L-phenylalanyl-tRNA(Phe) + AMP + diphosphate + H(+). The sequence is that of Phenylalanine--tRNA ligase alpha subunit from Christiangramia forsetii (strain DSM 17595 / CGMCC 1.15422 / KT0803) (Gramella forsetii).